Here is a 267-residue protein sequence, read N- to C-terminus: tRNA-cytidine(32) 2-sulfurtransferase (267 aa).

Residues 37–42 carry the PP-loop motif motif; the sequence is SGGKDS. [4Fe-4S] cluster-binding residues include Cys112, Cys115, and Cys203.

It belongs to the TtcA family. In terms of assembly, homodimer. Requires Mg(2+) as cofactor. The cofactor is [4Fe-4S] cluster.

It is found in the cytoplasm. The catalysed reaction is cytidine(32) in tRNA + S-sulfanyl-L-cysteinyl-[cysteine desulfurase] + AH2 + ATP = 2-thiocytidine(32) in tRNA + L-cysteinyl-[cysteine desulfurase] + A + AMP + diphosphate + H(+). Its pathway is tRNA modification. Functionally, catalyzes the ATP-dependent 2-thiolation of cytidine in position 32 of tRNA, to form 2-thiocytidine (s(2)C32). The sulfur atoms are provided by the cysteine/cysteine desulfurase (IscS) system. In Dichelobacter nodosus (strain VCS1703A), this protein is tRNA-cytidine(32) 2-sulfurtransferase.